Consider the following 223-residue polypeptide: Ubiquitin carboxyl-terminal hydrolase isozyme L1 (223 aa).

Position 1 is an N-acetylmethionine (Met1). The region spanning 2–221 (QLKPMEINPE…VRFSAVALCK (220 aa)) is the UCH catalytic domain. Residues 5-10 (PMEINP) are interaction with ubiquitin. The active-site Nucleophile is the Cys90. The residue at position 125 (Ser125) is a Phosphoserine. His161 acts as the Proton donor in catalysis. The segment at 211–216 (EVRFSA) is interaction with ubiquitin. Residue Cys220 is the site of S-farnesyl cysteine attachment. The propeptide at 221 to 223 (KAA) is removed in mature form.

The protein belongs to the peptidase C12 family. In terms of assembly, monomer. Homodimer. Interacts with COPS5 and SNCA. Post-translationally, O-glycosylated.

The protein localises to the cytoplasm. The protein resides in the endoplasmic reticulum membrane. The catalysed reaction is Thiol-dependent hydrolysis of ester, thioester, amide, peptide and isopeptide bonds formed by the C-terminal Gly of ubiquitin (a 76-residue protein attached to proteins as an intracellular targeting signal).. Ubiquitin-protein hydrolase involved both in the processing of ubiquitin precursors and of ubiquitinated proteins. This enzyme is a thiol protease that recognizes and hydrolyzes a peptide bond at the C-terminal glycine of ubiquitin. Also binds to free monoubiquitin and may prevent its degradation in lysosomes. The homodimer may have ATP-independent ubiquitin ligase activity. The polypeptide is Ubiquitin carboxyl-terminal hydrolase isozyme L1 (UCHL1) (Sus scrofa (Pig)).